The primary structure comprises 1363 residues: Zinc finger protein 541 (1363 aa).

2 disordered regions span residues 1 to 23 and 106 to 137; these read MEPY…SFSE and LGAL…SPQN. 3 consecutive C2H2-type zinc fingers follow at residues 140 to 162, 168 to 190, and 196 to 221; these read LDCS…YLTH, HVCK…MLTH, and FVCI…EVQH. Disordered stretches follow at residues 232–269, 286–387, 440–532, and 574–741; these read EEEA…GSVL, KIPS…GWPE, VASR…PGGL, and QVAT…GYRL. Polar residues predominate over residues 311 to 321; that stretch reads SLGSSSCTPAS. The span at 335 to 345 shows a compositional bias: basic and acidic residues; it reads EETHPPRKEAA. The span at 453 to 465 shows a compositional bias: low complexity; that stretch reads PSSTPTSVEPSPS. Positions 597-608 are enriched in pro residues; it reads GPWPPQTLPPAP. The span at 659–670 shows a compositional bias: low complexity; that stretch reads PPSLTGPGLLPS. A C2H2-type 4 zinc finger spans residues 838-860; the sequence is FVCKNCSQMFYTEKGLSSHMCFH. The interval 935–978 is disordered; that stretch reads QGQEKDGEERDSKESCQYRKRKKRPQPKALFAPPAPSALGEPGP. The segment covering 937–951 has biased composition (basic and acidic residues); the sequence is QEKDGEERDSKESCQ. The region spanning 1063–1155 is the ELM2 domain; sequence PHINVGSRFQ…VALETLLLRG (93 aa). One can recognise an SANT domain in the interval 1170 to 1221; sequence TGSDIWTPMEKRLFKKAFCAHKKDFYLIHKMIQTKSVAQCVEYYYIWKKMVK. The tract at residues 1243–1298 is disordered; the sequence is RTEDKVTCSPRERPTHRPTPELKIKTKSYRRESILHSSPSAAPKRTPEPPGSVESQ. Basic and acidic residues predominate over residues 1244-1276; it reads TEDKVTCSPRERPTHRPTPELKIKTKSYRRESI. The C2H2-type 5 zinc-finger motif lies at 1301 to 1323; that stretch reads FPCRECERVFDKIKSRNAHMKRH. A disordered region spans residues 1343 to 1363; that stretch reads LKEEEEEEEEELGADMGPLQW. Acidic residues predominate over residues 1345–1355; it reads EEEEEEEEELG.

Interacts with DNTTIP1. Identified in a complex with KCTD19, HDAC1 and HSPA2. Identified in a complex with HDAC1, HDAC2, DNTTIP1 and KCTD19. Identified in a complex with KCTD19 and HDAC1. Germ-cell-specific. Specifically present in testicular spermatogenic cells, but not in testicular and mature sperm. During spermatogenesis, it is present in spermatocytes and round spermatids only (at protein level).

Its subcellular location is the nucleus. In terms of biological role, transcription regulator which is essential for male fertility and for the completion of meiotic prophase in spermatocytes. Regulates progression of the pachytene stage of meiotic prophase by activating the expression of genes involved in meiosis and post-meiosis during spermatogenesis. Maintains the repression of pre-pachytene transcriptional programs, including meiotic double-strand breaks (DSB) formation genes in pachytene spermatocytes and suppresses aberrant DSB formation after mid-pachytene, thus ensuring meiosis progression. This Mus musculus (Mouse) protein is Zinc finger protein 541 (Znf541).